The primary structure comprises 298 residues: UDP-3-O-acyl-N-acetylglucosamine deacetylase (298 aa).

Zn(2+)-binding residues include histidine 75, histidine 232, and aspartate 236. Histidine 259 acts as the Proton donor in catalysis.

Belongs to the LpxC family. Zn(2+) is required as a cofactor.

The catalysed reaction is a UDP-3-O-[(3R)-3-hydroxyacyl]-N-acetyl-alpha-D-glucosamine + H2O = a UDP-3-O-[(3R)-3-hydroxyacyl]-alpha-D-glucosamine + acetate. It functions in the pathway glycolipid biosynthesis; lipid IV(A) biosynthesis; lipid IV(A) from (3R)-3-hydroxytetradecanoyl-[acyl-carrier-protein] and UDP-N-acetyl-alpha-D-glucosamine: step 2/6. Its function is as follows. Catalyzes the hydrolysis of UDP-3-O-myristoyl-N-acetylglucosamine to form UDP-3-O-myristoylglucosamine and acetate, the committed step in lipid A biosynthesis. This chain is UDP-3-O-acyl-N-acetylglucosamine deacetylase, found in Nitratiruptor sp. (strain SB155-2).